A 368-amino-acid polypeptide reads, in one-letter code: 3-dehydroquinate synthase (368 aa).

NAD(+)-binding positions include Gly112–Asp116, Thr136–Thr137, Lys149, Lys158, and Phe176–Thr179. The Zn(2+) site is built by Glu191, His257, and His274.

It belongs to the sugar phosphate cyclases superfamily. Dehydroquinate synthase family. Co(2+) is required as a cofactor. Requires Zn(2+) as cofactor. It depends on NAD(+) as a cofactor.

It is found in the cytoplasm. The catalysed reaction is 7-phospho-2-dehydro-3-deoxy-D-arabino-heptonate = 3-dehydroquinate + phosphate. Its pathway is metabolic intermediate biosynthesis; chorismate biosynthesis; chorismate from D-erythrose 4-phosphate and phosphoenolpyruvate: step 2/7. Functionally, catalyzes the conversion of 3-deoxy-D-arabino-heptulosonate 7-phosphate (DAHP) to dehydroquinate (DHQ). In Natranaerobius thermophilus (strain ATCC BAA-1301 / DSM 18059 / JW/NM-WN-LF), this protein is 3-dehydroquinate synthase.